A 441-amino-acid chain; its full sequence is Glutamyl-tRNA reductase (441 aa).

Residues 58–61 (TCNR), serine 116, 121–123 (EPD), and glutamine 127 contribute to the substrate site. The Nucleophile role is filled by cysteine 59. Position 195-200 (195-200 (GAGMAG)) interacts with NADP(+).

It belongs to the glutamyl-tRNA reductase family. Homodimer.

The enzyme catalyses (S)-4-amino-5-oxopentanoate + tRNA(Glu) + NADP(+) = L-glutamyl-tRNA(Glu) + NADPH + H(+). The protein operates within porphyrin-containing compound metabolism; protoporphyrin-IX biosynthesis; 5-aminolevulinate from L-glutamyl-tRNA(Glu): step 1/2. In terms of biological role, catalyzes the NADPH-dependent reduction of glutamyl-tRNA(Glu) to glutamate 1-semialdehyde (GSA). In Ignicoccus hospitalis (strain KIN4/I / DSM 18386 / JCM 14125), this protein is Glutamyl-tRNA reductase.